Consider the following 581-residue polypeptide: Jasmonoyl--L-amino acid synthetase GH3.5 (581 aa).

S92 contacts ATP. S95 serves as a coordination point for jasmonate. Residues T115, N161, and 324 to 329 each bind ATP; that span reads GASEGW. 159–163 is an an L-alpha-amino acid binding site; the sequence is TTNLY. Jasmonate-binding positions include 321–324 and S326; that span reads ADYG. 534 to 538 is an an L-alpha-amino acid binding site; that stretch reads EILDH. Residue K561 participates in ATP binding.

Belongs to the IAA-amido conjugating enzyme family. In terms of tissue distribution, expressed in green shoots, roots and flowers.

The catalysed reaction is a jasmonate + an L-alpha-amino acid + ATP = a jasmonyl-L-amino acid + AMP + diphosphate + H(+). Its function is as follows. Catalyzes the synthesis of jasmonate-amino acid conjugates by adenylation. Catalyzes the conjugation of jasmonate (JA) to Ile when expressed in a heterologous system (E.coli). Catalyzes in vitro the conjugation of jasmonate (JA) to Ile, Phe, Cys, Leu, Met, Ala, Val and Trp. Involved in the production of JA-Ile in response to infection by the rice blast fungus Magnaporthe oryzae. Required for the accumulation of the flavonoid phytoalexin sakuranetin in response to infection by the rice blast fungus. Involved in herbivory-induced JA-Ile accumulation. Involved in the production of JA-Ile in response to wounding. Required for modulation of light and JA signaling in photomorphogenesis. Required for normal seed development. Required for optimal flower opening and closing and anther dehiscence. May catalyze the synthesis of indole-3-acetic acid (IAA)-amino acid conjugates, providing a mechanism for the plant to cope with the presence of excess auxin. This Oryza sativa subsp. japonica (Rice) protein is Jasmonoyl--L-amino acid synthetase GH3.5.